Reading from the N-terminus, the 593-residue chain is NADH-quinone oxidoreductase subunit C/D (593 aa).

Positions 1–184 (MTADNAIFIP…DPYSLTLAKQ (184 aa)) are NADH dehydrogenase I subunit C. The tract at residues 208 to 593 (DYMFLNLGPN…IDFVMADVDR (386 aa)) is NADH dehydrogenase I subunit D.

It in the N-terminal section; belongs to the complex I 30 kDa subunit family. In the C-terminal section; belongs to the complex I 49 kDa subunit family. As to quaternary structure, NDH-1 is composed of 13 different subunits. Subunits NuoB, CD, E, F, and G constitute the peripheral sector of the complex.

The protein resides in the cell inner membrane. The enzyme catalyses a quinone + NADH + 5 H(+)(in) = a quinol + NAD(+) + 4 H(+)(out). In terms of biological role, NDH-1 shuttles electrons from NADH, via FMN and iron-sulfur (Fe-S) centers, to quinones in the respiratory chain. The immediate electron acceptor for the enzyme in this species is believed to be ubiquinone. Couples the redox reaction to proton translocation (for every two electrons transferred, four hydrogen ions are translocated across the cytoplasmic membrane), and thus conserves the redox energy in a proton gradient. The chain is NADH-quinone oxidoreductase subunit C/D from Pseudomonas putida (strain W619).